The following is a 212-amino-acid chain: Ras-related protein Rab-2A (212 aa).

Residue alanine 2 is modified to N-acetylalanine. The tract at residues 2–19 (AYAYLFKYIIIGDTGVGK) is required for interaction with PRKCI. The GTP site is built by glycine 16, valine 17, glycine 18, lysine 19, serine 20, cysteine 21, and threonine 38. Residue serine 20 participates in Mg(2+) binding. The Switch 1 signature appears at 37–42 (LTIGVE). Mg(2+) contacts are provided by threonine 38 and aspartate 61. The Switch 2 signature appears at 63 to 72 (AGQESFRSIT). Residues glycine 64, asparagine 119, lysine 120, aspartate 122, alanine 150, and lysine 151 each coordinate GTP. Residues cysteine 211 and cysteine 212 are each lipidated (S-geranylgeranyl cysteine).

The protein belongs to the small GTPase superfamily. Rab family. In terms of assembly, interacts with PRKCI. Interacts with TRIP11. Interacts (in GTP-bound form) with GARIN1B. Interacts (GTP-bound) with HOPS complex component VPS39; interaction contributes to obtaining a functional HOPS complex that promotes autophagosome-lysosome membrane fusion driven by STX17-SNAP29-VAMP8. May interact with VPS41. It depends on Mg(2+) as a cofactor. Post-translationally, prenylated. Prenylation is required for association with cellular membranes.

The protein resides in the endoplasmic reticulum-Golgi intermediate compartment membrane. The protein localises to the melanosome. Its subcellular location is the endoplasmic reticulum membrane. It is found in the golgi apparatus membrane. It localises to the cytoplasmic vesicle. The protein resides in the secretory vesicle. The protein localises to the acrosome. Its subcellular location is the autophagosome membrane. The catalysed reaction is GTP + H2O = GDP + phosphate + H(+). Regulated by guanine nucleotide exchange factors (GEFs) which promote the exchange of bound GDP for free GTP, GTPase activating proteins (GAPs) which increase the GTP hydrolysis activity, and GDP dissociation inhibitors (GDIs) which inhibit the dissociation of the nucleotide from the GTPase. Functionally, the small GTPases Rab are key regulators of intracellular membrane trafficking, from the formation of transport vesicles to their fusion with membranes. Rabs cycle between active GTP-bound and inactive GDP-bound states. In their active state, drive transport of vesicular carriers from donor organelles to acceptor organelles to regulate the membrane traffic that maintains organelle identity and morphology. RAB2A regulates autophagy by promoting autophagosome-lysosome fusion via recruitment of the HOPS endosomal tethering complex; this process involves autophagosomal RAB2A and lysosomal RAB39A recruitment of HOPS subcomplexes VPS39-VPS11 and VPS41-VPS16-VPS18-VPS33A, respectively, which assemble into a functional complex to mediate membrane tethering and SNAREs-driven membrane fusion. Required for protein transport from the endoplasmic reticulum to the Golgi complex. Regulates the compacted morphology of the Golgi. Together with RAB2B, redundantly required for efficient autophagic flux. In Canis lupus familiaris (Dog), this protein is Ras-related protein Rab-2A (RAB2A).